A 170-amino-acid polypeptide reads, in one-letter code: RNA pyrophosphohydrolase (170 aa).

The Nudix hydrolase domain occupies 9–162; it reads PYRPCAGIMV…KRAVYEKVVA (154 aa). The short motif at 50–71 is the Nudix box element; that stretch reads GGIDDGERPLTAAIRELYEETG.

Belongs to the Nudix hydrolase family. RppH subfamily. A divalent metal cation serves as cofactor.

Accelerates the degradation of transcripts by removing pyrophosphate from the 5'-end of triphosphorylated RNA, leading to a more labile monophosphorylated state that can stimulate subsequent ribonuclease cleavage. The polypeptide is RNA pyrophosphohydrolase (Agrobacterium fabrum (strain C58 / ATCC 33970) (Agrobacterium tumefaciens (strain C58))).